The primary structure comprises 293 residues: NAD kinase (293 aa).

Asp-73 functions as the Proton acceptor in the catalytic mechanism. NAD(+)-binding positions include 73 to 74, 147 to 148, His-158, Arg-175, Asp-177, 188 to 193, and Gln-248; these read DG, NE, and TAYSLS.

The protein belongs to the NAD kinase family. Requires a divalent metal cation as cofactor.

The protein resides in the cytoplasm. It catalyses the reaction NAD(+) + ATP = ADP + NADP(+) + H(+). Functionally, involved in the regulation of the intracellular balance of NAD and NADP, and is a key enzyme in the biosynthesis of NADP. Catalyzes specifically the phosphorylation on 2'-hydroxyl of the adenosine moiety of NAD to yield NADP. This chain is NAD kinase, found in Photobacterium profundum (strain SS9).